Reading from the N-terminus, the 203-residue chain is LexA repressor (203 aa).

The H-T-H motif DNA-binding region spans 30–50 (VREICQAVSLKSTSTVHGHLK). Residues Ser-127 and Lys-164 each act as for autocatalytic cleavage activity in the active site.

The protein belongs to the peptidase S24 family. In terms of assembly, homodimer.

The catalysed reaction is Hydrolysis of Ala-|-Gly bond in repressor LexA.. Represses a number of genes involved in the response to DNA damage (SOS response), including recA and lexA. In the presence of single-stranded DNA, RecA interacts with LexA causing an autocatalytic cleavage which disrupts the DNA-binding part of LexA, leading to derepression of the SOS regulon and eventually DNA repair. In Clostridium perfringens (strain SM101 / Type A), this protein is LexA repressor.